A 491-amino-acid polypeptide reads, in one-letter code: Ribulose-1,5 bisphosphate carboxylase/oxygenase large subunit N-methyltransferase, chloroplastic (491 aa).

The 225-residue stretch at 67-291 (EGVVTTKTPV…AGDQLFIQYD (225 aa)) folds into the SET domain.

The protein belongs to the class V-like SAM-binding methyltransferase superfamily. Plant protein-lysine LSMT methyltransferase family.

It is found in the plastid. It localises to the chloroplast. The catalysed reaction is L-lysyl-[ribulose-1,5-bisphosphate carboxylase] + 3 S-adenosyl-L-methionine = N(6),N(6),N(6)-trimethyl-L-lysyl-[ribulose-1,5-bisphosphate carboxylase] + 3 S-adenosyl-L-homocysteine + 3 H(+). In terms of biological role, methylates 'Lys-14' of the large subunit of RuBisCO. The sequence is that of Ribulose-1,5 bisphosphate carboxylase/oxygenase large subunit N-methyltransferase, chloroplastic (RBCMT) from Nicotiana tabacum (Common tobacco).